Reading from the N-terminus, the 815-residue chain is RNA-binding protein 5 (815 aa).

Residues 1 to 93 (MGSDKRVSRT…EHDYRHDISD (93 aa)) are disordered. Serine 18, serine 59, serine 69, serine 72, and serine 78 each carry phosphoserine. Positions 98–178 (KTIMLRGLPI…KHIAMHYSNP (81 aa)) constitute an RRM 1 domain. A RanBP2-type zinc finger spans residues 181-210 (KFEDWLCNKCCLNNFRKRLKCFRCGADKFD). The region spanning 231 to 315 (DTIILRNIAP…KTIGVDFAKS (85 aa)) is the RRM 2 domain. The segment at 321–809 (VLSDGNRVSA…KDAVRKAMFA (489 aa)) is required for interaction with U2AF2. Residues 411–422 (QSPQLYNQTSNP) show a composition bias toward polar residues. Disordered stretches follow at residues 411 to 468 (QSPQ…DESS) and 507 to 540 (PAAE…AQQI). Residues 426–446 (PTEEAQPSTSTSTQAPAASPT) are compositionally biased toward low complexity. Serine 444 carries the post-translational modification Phosphoserine. The sufficient for interaction with ACIN1, PRPF8, SFRS3, SNRPB, SNRPN, SNRNP70 and SNRNP200 stretch occupies residues 452–535 (TKYAVPDTST…KEKKEKPKSK (84 aa)). 2 positions are modified to phosphoserine: serine 621 and serine 624. The C2H2-type; atypical zinc finger occupies 647–677 (MACLLCRRQFPNKDALVRHQQLSDLHKQNMD). The 47-residue stretch at 743–789 (HSNIGNKMLQAMGWREGSGLGRKCQGITAPIEAQVRLKGAGLGAKGS) folds into the G-patch domain.

It belongs to the RBM5/RBM10 family. As to quaternary structure, component of the spliceosome A complex (also known as the prespliceosome). Appears to dissociate from the spliceosome upon formation of the spliceosome B complex (also known as the precatalytic spliceosome), in which the heterotrimeric U4/U6.U5 snRNPs are bound. Interacts with U2AF2; this interaction is direct. Also interacts with ACIN1, PRPF8, SFRS3, SNRPB, SNRPN, SNRNP70 and SNRNP200; these interactions may be indirect. Isoform 5 is widely expressed in normal tissues and is expressed at increased levels in T-leukemic cell lines.

The protein localises to the nucleus. Component of the spliceosome A complex. Binds to ssRNA containing the consensus sequence 5'-AGGUAA-3'. Regulates alternative splicing of a number of mRNAs. May modulate splice site pairing after recruitment of the U1 and U2 snRNPs to the 5' and 3' splice sites of the intron. May both positively and negatively regulate apoptosis by regulating the alternative splicing of several genes involved in this process, including FAS and CASP2/caspase-2. In the case of FAS, promotes exclusion of exon 6 thereby producing a soluble form of FAS that inhibits apoptosis. In the case of CASP2/caspase-2, promotes exclusion of exon 9 thereby producing a catalytically active form of CASP2/Caspase-2 that induces apoptosis. The polypeptide is RNA-binding protein 5 (RBM5) (Homo sapiens (Human)).